We begin with the raw amino-acid sequence, 191 residues long: Chromobox protein homolog 5 (191 aa).

Phosphoserine is present on residues serine 11, serine 12, serine 13, and serine 14. A Chromo 1 domain is found at tyrosine 20–asparagine 78. Residue lysine 32 forms a Glycyl lysine isopeptide (Lys-Gly) (interchain with G-Cter in SUMO2) linkage. The residue at position 40 (lysine 40) is an N6-acetyllysine. Residues tyrosine 70–phenylalanine 117 form a disordered region. Residues methionine 73–lysine 89 show a composition bias toward basic and acidic residues. Residue lysine 91 forms a Glycyl lysine isopeptide (Lys-Gly) (interchain with G-Cter in SUMO2) linkage. Residues serine 92, serine 95, and serine 97 each carry the phosphoserine modification. Glycyl lysine isopeptide (Lys-Gly) (interchain with G-Cter in SUMO2) cross-links involve residues lysine 102, lysine 106, lysine 154, and lysine 184. The 59-residue stretch at leucine 121–glutamate 179 folds into the Chromo 2; shadow subtype domain.

Homodimer. Interacts with histone H3 methylated at 'Lys-9'. Interacts (via Chromo 2; shadow subtype domain) with the MIS12 complex subunit NSL1; the interaction is direct, involves dimeric CBX5, and occurs during interphase. Interacts with POGZ; POGZ and PXVXL motif-containing proteins such as INCENP and TRIM28 compete for interaction with CBX5. Interacts with LRIF1 (via PxVxL motif). Interacts with INCENP. Interacts with TRIM24. Interacts (via the chromoshadow domain) with ATRX; the interaction is direct. Interacts (via the chromoshadow domain) with CHAF1A; the interaction is direct. Interacts (via the chromoshadow domain) with LBR; the interaction is direct. Interacts (via the chromoshadow domain) with NIPBL; the interaction is direct. Interacts (via the chromoshadow domain) with SP100; the interaction is direct. Interacts (via the chromoshadow domain) with STAM2; the interaction is direct. Interacts (via the chromoshadow domain) with TRIM28; the interaction is direct. Interacts (via the chromoshadow domain) with CBX3; the interaction is direct. Interacts with PRR14 (via N-terminus). Interacts with RRP1B. Interacts with HNRNPU (via C-terminus); this interaction is, at least in part, RNA-dependent. Interacts with ZNF263; recruited to the SIX3 promoter along with other proteins involved in chromatin modification and transcriptional corepression where it contributes to transcriptional repression. Interacts with AURKB during mitosis. Interacts with CHAMP1. Interacts with BAHD1. Interacts with HP1BP3. Interacts with CHD3. Interacts with CHD4. Interacts with SMYD5. Interacts with KMT5B. Interacts with KMT5C. In terms of assembly, (Microbial infection) Interacts with JC virus agnoprotein; this interaction induces the dissociation of CBX5 from LBR, resulting in destabilization of the nuclear envelope. Post-translationally, phosphorylation of HP1 and LBR may be responsible for some of the alterations in chromatin organization and nuclear structure which occur at various times during the cell cycle. Phosphorylated during interphase and possibly hyper-phosphorylated during mitosis. Ubiquitinated.

The protein resides in the nucleus. The protein localises to the chromosome. Its subcellular location is the centromere. Its function is as follows. Component of heterochromatin that recognizes and binds histone H3 tails methylated at 'Lys-9' (H3K9me), leading to epigenetic repression. In contrast, it is excluded from chromatin when 'Tyr-41' of histone H3 is phosphorylated (H3Y41ph). May contribute to the association of heterochromatin with the inner nuclear membrane by interactions with the lamin-B receptor (LBR). Involved in the formation of kinetochore through interaction with the MIS12 complex subunit NSL1. Required for the formation of the inner centromere. The protein is Chromobox protein homolog 5 (CBX5) of Homo sapiens (Human).